The chain runs to 288 residues: Polyamine aminopropyltransferase (288 aa).

One can recognise a PABS domain in the interval Ser9–Met242. Gln36 contacts S-methyl-5'-thioadenosine. His67 and Asp91 together coordinate spermidine. S-methyl-5'-thioadenosine is bound by residues Glu111 and Asn143 to Gly144. The active-site Proton acceptor is the Asp162. An S-methyl-5'-thioadenosine-binding site is contributed by Pro169.

The protein belongs to the spermidine/spermine synthase family. Homodimer or homotetramer.

Its subcellular location is the cytoplasm. It catalyses the reaction S-adenosyl 3-(methylsulfanyl)propylamine + putrescine = S-methyl-5'-thioadenosine + spermidine + H(+). The protein operates within amine and polyamine biosynthesis; spermidine biosynthesis; spermidine from putrescine: step 1/1. In terms of biological role, catalyzes the irreversible transfer of a propylamine group from the amino donor S-adenosylmethioninamine (decarboxy-AdoMet) to putrescine (1,4-diaminobutane) to yield spermidine. The chain is Polyamine aminopropyltransferase from Prochlorococcus marinus (strain NATL1A).